A 378-amino-acid polypeptide reads, in one-letter code: Queuine tRNA-ribosyltransferase (378 aa).

The active-site Proton acceptor is Asp89. Substrate contacts are provided by residues 89-93, Asp143, Gln194, and Gly221; that span reads DSGGF. The segment at 252–258 is RNA binding; it reads GVGTPAN. Asp271 functions as the Nucleophile in the catalytic mechanism. Residues 276-280 are RNA binding; important for wobble base 34 recognition; sequence ARNGR. Positions 309, 311, 314, and 340 each coordinate Zn(2+).

The protein belongs to the queuine tRNA-ribosyltransferase family. As to quaternary structure, homodimer. Within each dimer, one monomer is responsible for RNA recognition and catalysis, while the other monomer binds to the replacement base PreQ1. Requires Zn(2+) as cofactor.

The catalysed reaction is 7-aminomethyl-7-carbaguanine + guanosine(34) in tRNA = 7-aminomethyl-7-carbaguanosine(34) in tRNA + guanine. Its pathway is tRNA modification; tRNA-queuosine biosynthesis. Its function is as follows. Catalyzes the base-exchange of a guanine (G) residue with the queuine precursor 7-aminomethyl-7-deazaguanine (PreQ1) at position 34 (anticodon wobble position) in tRNAs with GU(N) anticodons (tRNA-Asp, -Asn, -His and -Tyr). Catalysis occurs through a double-displacement mechanism. The nucleophile active site attacks the C1' of nucleotide 34 to detach the guanine base from the RNA, forming a covalent enzyme-RNA intermediate. The proton acceptor active site deprotonates the incoming PreQ1, allowing a nucleophilic attack on the C1' of the ribose to form the product. After dissociation, two additional enzymatic reactions on the tRNA convert PreQ1 to queuine (Q), resulting in the hypermodified nucleoside queuosine (7-(((4,5-cis-dihydroxy-2-cyclopenten-1-yl)amino)methyl)-7-deazaguanosine). This chain is Queuine tRNA-ribosyltransferase, found in Lachnoclostridium phytofermentans (strain ATCC 700394 / DSM 18823 / ISDg) (Clostridium phytofermentans).